Consider the following 185-residue polypeptide: dTTP/UTP pyrophosphatase (185 aa).

The active-site Proton acceptor is D64.

The protein belongs to the Maf family. YhdE subfamily. The cofactor is a divalent metal cation.

It is found in the cytoplasm. The enzyme catalyses dTTP + H2O = dTMP + diphosphate + H(+). The catalysed reaction is UTP + H2O = UMP + diphosphate + H(+). Its function is as follows. Nucleoside triphosphate pyrophosphatase that hydrolyzes dTTP and UTP. May have a dual role in cell division arrest and in preventing the incorporation of modified nucleotides into cellular nucleic acids. The protein is dTTP/UTP pyrophosphatase of Thermococcus gammatolerans (strain DSM 15229 / JCM 11827 / EJ3).